A 589-amino-acid chain; its full sequence is Outer envelope protein 64, chloroplastic (589 aa).

Residue M1 is a topological domain, chloroplast intermembrane. The chain crosses the membrane as a helical span at residues 2 to 22 (ASQAANLWVLLGLGLAGILML). The Cytoplasmic segment spans residues 23–141 (TKKLKKTVRE…NPAAPTRIPG (119 aa)). A helical transmembrane segment spans residues 142-162 (GACSGAAVAVATNAVDFALGI). The Chloroplast intermembrane segment spans residues 163 to 398 (DTVGGVRVPA…EITSEDYQNR (236 aa)). Residues 399–419 (ASSLLSIASISGCCQVTVPLG) traverse the membrane as a helical segment. At 420-589 (HHEKCPISVS…LSAERLRKFQ (170 aa)) the chain is on the cytoplasmic side. TPR repeat units lie at residues 474–507 (AEIA…SDNN), 508–541 (ATYY…DKKN), and 542–575 (VKAY…EPNN).

As to quaternary structure, part of the Toc complex and of the intermembrane space complex. As to expression, expressed in roots, cotyledons, leaves and flower buds.

The protein resides in the plastid. It localises to the chloroplast outer membrane. Functionally, chaperone receptor mediating Hsp90-dependent protein targeting to chloroplasts. Bi-functional preprotein receptor acting on both sides of the membrane. Not essential for an efficient import of pre-proteins into plastids. This Arabidopsis thaliana (Mouse-ear cress) protein is Outer envelope protein 64, chloroplastic (OEP64).